Consider the following 264-residue polypeptide: Cell division protein FtsQ (264 aa).

The segment at 1–24 (MAGPTTAERGDRQQESSGPPPARW) is disordered. Residues 1–31 (MAGPTTAERGDRQQESSGPPPARWSGTRRLR) are Cytoplasmic-facing. A helical membrane pass occupies residues 32-52 (ALVVLAALLVLLAGGCAWLLY). Topologically, residues 53–264 (GSSWLRLERV…VPTAPASSGS (212 aa)) are extracellular. Residues 57-126 (LRLERVSVSG…HGIGLKVTER (70 aa)) form the POTRA domain.

This sequence belongs to the FtsQ/DivIB family. FtsQ subfamily.

Its subcellular location is the cell membrane. Functionally, essential cell division protein. This is Cell division protein FtsQ from Streptomyces collinus.